We begin with the raw amino-acid sequence, 206 residues long: Two-component response regulator ORR7 (206 aa).

Positions 53-92 are disordered; sequence VVPLHDNASAEDDDDDEEDDDEDDDDDDDEDDEEEAAPPY. Residues 61–88 show a composition bias toward acidic residues; that stretch reads SAEDDDDDEEDDDEDDDDDDDEDDEEEA. The Response regulatory domain occupies 92–205; the sequence is YVMAVDDSSV…DISRITSRML (114 aa). 4-aspartylphosphate is present on D138.

The protein belongs to the ARR family. Type-A subfamily. In terms of processing, two-component system major event consists of a His-to-Asp phosphorelay between a sensor histidine kinase (HK) and a response regulator (RR). In plants, the His-to-Asp phosphorelay involves an additional intermediate named Histidine-containing phosphotransfer protein (HPt). This multistep phosphorelay consists of a His-Asp-His-Asp sequential transfer of a phosphate group between first a His and an Asp of the HK protein, followed by the transfer to a conserved His of the HPt protein and finally the transfer to an Asp in the receiver domain of the RR protein. As to expression, expressed in flowers, and at low levels in roots, mature leaves and shoots.

Functionally, functions as a response regulator involved in His-to-Asp phosphorelay signal transduction system. Phosphorylation of the Asp residue in the receiver domain activates the ability of the protein to promote the transcription of target genes. Type-A response regulators seem to act as negative regulators of the cytokinin signaling. This Oryza sativa subsp. indica (Rice) protein is Two-component response regulator ORR7.